The primary structure comprises 418 residues: Glutamyl-tRNA reductase (418 aa).

Residues 49–52, Ser109, 114–116, and Gln120 contribute to the substrate site; these read TCNR and EPQ. Cys50 functions as the Nucleophile in the catalytic mechanism. 189 to 194 provides a ligand contact to NADP(+); it reads GAGETI.

The protein belongs to the glutamyl-tRNA reductase family. As to quaternary structure, homodimer.

The catalysed reaction is (S)-4-amino-5-oxopentanoate + tRNA(Glu) + NADP(+) = L-glutamyl-tRNA(Glu) + NADPH + H(+). The protein operates within porphyrin-containing compound metabolism; protoporphyrin-IX biosynthesis; 5-aminolevulinate from L-glutamyl-tRNA(Glu): step 1/2. Functionally, catalyzes the NADPH-dependent reduction of glutamyl-tRNA(Glu) to glutamate 1-semialdehyde (GSA). The chain is Glutamyl-tRNA reductase from Klebsiella pneumoniae (strain 342).